Reading from the N-terminus, the 1227-residue chain is MIDVNEFEYMKIGLASPDKIRSWSYGEVKKPETINYRTLKPEKDGLFCERIFGPTKDWECHCGKYKRVRYKGVVCDRCGVEVTRAKVRRERMGHIELAAPVSHIWYFKGIPSRMGLILDMSPRALEEVIYFASYVVIDAGATNLESKQLLSEKEYRAYREKFGNTFEASMGAEAIKKLLGKIDLEDETHSLKEELKSAQGQRRTRAIKRLEVVESFRNSGNSPEWMILDVLPVIPPELRPMVQLDGGRFATSDLNDLYRRVINRNNRLKRLLDLGAPSIIVQNEKRMLQEAVDALIDNGRRGRPVTGPGNRPLKSLSHMLKGKQGRFRQNLLGKRVDYSGRSVIVVGPNLKMYQCGLPKEMAIELFKPFVMKELVERGLAHNIKSAKRKIERLNNDVWDVLEDVIREHPVLLNRAPTLHRLGIQAFEPTLVEGRAIRLHPLVCTAYNADFDGDQMAVHVPLSAEAQAEARLLMLAAQNILNPKDGKPVVTPSQDMVLGNYYLTLERESARGEGTIFYGPNEVLIAYDTGHVHLHTRIAIKAGSLNNPTFTEEQNNMFLLTTVGKVIFNEILPESFPYINEPTDFNLEQVTPEKYFVNLTIDEETLKELESDSAYNSLDEKGKIDAQRTAVLRKHFESVPVVNPFRKKFLGNIIAEVFKRFHITETSKMLDRMKNLGFKYSTRAGITVGVSDIVVLPDKGEILAVAQEKVDKVQAQFRRGFITEDERYDRVISSWSAAKDEIQAKLMKSLEKTNPIFMMSDSGARGNASNFTQLAGMRGLMANPAGRIIELPIKSSFREGLTVLEYFISTHGARKGLADTALKTADSGYLTRRLVDVAQDVIVREDDCGTDRGLTIGALMEGTELIEALDERIVGRHTKKTIVHPETGEVILNKDGLIDQDVARAIIEAGIEEVTIRSAFTCNTKHGVCKKCYGMNLATGEKVEVGEAVGIIAAQSIGEPGTQLTMRTFHTGGVAGDDITQGLPRIQEIFEARNPKGQSVISEIAGTVSDITEIREGLKEITIQGDVETRKYQAPYNARLKVIEGDNVERGQVLTEGSIDPKQLLKVKDVSTVQEYLLKEVQKVYRMQGVEIGDKHIEVMVRQMLRKVRVIEAGDTDLLPGSLLDIHQFAEANADAVMDGKNPATCRPVILGITKASLETESFLSAASFQETTRVLTDAAIKGKRDELLGLKENVIIGKLVPAGTGMQRYRQIRIEKDELDTEVVSAE.

Zn(2+) is bound by residues Cys60, Cys62, Cys75, and Cys78. Residues Asp449, Asp451, and Asp453 each coordinate Mg(2+). Residues Cys847, Cys921, Cys928, and Cys931 each coordinate Zn(2+).

It belongs to the RNA polymerase beta' chain family. In terms of assembly, the RNAP catalytic core consists of 2 alpha, 1 beta, 1 beta' and 1 omega subunit. When a sigma factor is associated with the core the holoenzyme is formed, which can initiate transcription. Mg(2+) is required as a cofactor. Requires Zn(2+) as cofactor.

It catalyses the reaction RNA(n) + a ribonucleoside 5'-triphosphate = RNA(n+1) + diphosphate. In terms of biological role, DNA-dependent RNA polymerase catalyzes the transcription of DNA into RNA using the four ribonucleoside triphosphates as substrates. The chain is DNA-directed RNA polymerase subunit beta' from Lysinibacillus sphaericus (strain C3-41).